The following is a 292-amino-acid chain: MEITASLVKELRERTGAGMMECKKALVENAGDIDAAAEWLRKSGLAKADKKADRVAAEGRIATAQAGGKAVLVEVNSETDFVAKDENFLAFTDVVANAALNSDATDADALKSVKLDSGETIEERRAAVIAKVGENLQVRRLVRIDSANNVAAYVHGGRIGVLVELKGGDAELARGIAMHIAAMNPPHVKASDVPAEFVAKEKEIELAKMSEKDKAKPAEILEKIISGKISKIVNEVTLYGQPYVLNTDQTVEQAVKAAGAEVIGFQRLAVGEGIEKVVEDYAAEVMKQAGLA.

The interval 79–82 (TDFV) is involved in Mg(2+) ion dislocation from EF-Tu.

The protein belongs to the EF-Ts family.

The protein resides in the cytoplasm. Its function is as follows. Associates with the EF-Tu.GDP complex and induces the exchange of GDP to GTP. It remains bound to the aminoacyl-tRNA.EF-Tu.GTP complex up to the GTP hydrolysis stage on the ribosome. The protein is Elongation factor Ts of Xanthomonas campestris pv. campestris (strain ATCC 33913 / DSM 3586 / NCPPB 528 / LMG 568 / P 25).